Reading from the N-terminus, the 309-residue chain is Foldase protein PrsA 2 (309 aa).

A signal peptide spans 1–20 (MKYRLIGVGASLVVAVMLTG). The N-palmitoyl cysteine moiety is linked to residue cysteine 21. Cysteine 21 carries the S-diacylglycerol cysteine lipid modification. The region spanning 137–232 (MPMTTVQHIA…TADTKDKPTY (96 aa)) is the PpiC domain.

The protein belongs to the PrsA family.

It localises to the cell membrane. The catalysed reaction is [protein]-peptidylproline (omega=180) = [protein]-peptidylproline (omega=0). In terms of biological role, plays a major role in protein secretion by helping the post-translocational extracellular folding of several secreted proteins. The chain is Foldase protein PrsA 2 (prsA2) from Lactiplantibacillus plantarum (strain ATCC BAA-793 / NCIMB 8826 / WCFS1) (Lactobacillus plantarum).